We begin with the raw amino-acid sequence, 161 residues long: Phosphopantetheine adenylyltransferase (161 aa).

T9 contributes to the substrate binding site. ATP is bound by residues 9 to 10 (TF) and H17. Residues K41, L73, and R87 each coordinate substrate. Residues 88 to 90 (GLR), E98, and 123 to 129 (YSFISST) contribute to the ATP site.

Belongs to the bacterial CoaD family. Homohexamer. The cofactor is Mg(2+).

It is found in the cytoplasm. It carries out the reaction (R)-4'-phosphopantetheine + ATP + H(+) = 3'-dephospho-CoA + diphosphate. Its pathway is cofactor biosynthesis; coenzyme A biosynthesis; CoA from (R)-pantothenate: step 4/5. In terms of biological role, reversibly transfers an adenylyl group from ATP to 4'-phosphopantetheine, yielding dephospho-CoA (dPCoA) and pyrophosphate. The protein is Phosphopantetheine adenylyltransferase of Pseudomonas putida (strain ATCC 47054 / DSM 6125 / CFBP 8728 / NCIMB 11950 / KT2440).